The primary structure comprises 280 residues: 4-diphosphocytidyl-2-C-methyl-D-erythritol kinase (280 aa).

The active site involves K9. 93 to 103 (PVAAGLGGGSS) is a binding site for ATP. Residue D135 is part of the active site.

Belongs to the GHMP kinase family. IspE subfamily.

It carries out the reaction 4-CDP-2-C-methyl-D-erythritol + ATP = 4-CDP-2-C-methyl-D-erythritol 2-phosphate + ADP + H(+). It participates in isoprenoid biosynthesis; isopentenyl diphosphate biosynthesis via DXP pathway; isopentenyl diphosphate from 1-deoxy-D-xylulose 5-phosphate: step 3/6. Catalyzes the phosphorylation of the position 2 hydroxy group of 4-diphosphocytidyl-2C-methyl-D-erythritol. This chain is 4-diphosphocytidyl-2-C-methyl-D-erythritol kinase, found in Syntrophotalea carbinolica (strain DSM 2380 / NBRC 103641 / GraBd1) (Pelobacter carbinolicus).